Here is a 210-residue protein sequence, read N- to C-terminus: Small ribosomal subunit protein bS6 (210 aa).

The disordered stretch occupies residues 99-210 (PLPTKRNTKS…KDTKEVKEEG (112 aa)). A compositionally biased stretch (basic and acidic residues) spans 120-210 (NDTKEVKEAK…KDTKEVKEEG (91 aa)).

This sequence belongs to the bacterial ribosomal protein bS6 family.

In terms of biological role, binds together with bS18 to 16S ribosomal RNA. The polypeptide is Small ribosomal subunit protein bS6 (Prochlorococcus marinus (strain SARG / CCMP1375 / SS120)).